The sequence spans 327 residues: ATP-dependent 6-phosphofructokinase (327 aa).

Position 12 (G12) interacts with ATP. ADP-binding positions include 22-26 (RGVVR) and 55-60 (RYSVSD). Residues 73-74 (RF) and 103-106 (GDGS) contribute to the ATP site. D104 serves as a coordination point for Mg(2+). 127 to 129 (TID) provides a ligand contact to substrate. Catalysis depends on D129, which acts as the Proton acceptor. ADP is bound at residue R156. Residues R164 and 171–173 (MGR) contribute to the substrate site. Residues 187-189 (GCE), K213, and 215-217 (KKH) contribute to the ADP site. Substrate contacts are provided by residues E224, R245, and 251 to 254 (HIQR).

This sequence belongs to the phosphofructokinase type A (PFKA) family. ATP-dependent PFK group I subfamily. Prokaryotic clade 'B1' sub-subfamily. As to quaternary structure, homotetramer. Mg(2+) serves as cofactor.

It is found in the cytoplasm. The catalysed reaction is beta-D-fructose 6-phosphate + ATP = beta-D-fructose 1,6-bisphosphate + ADP + H(+). It functions in the pathway carbohydrate degradation; glycolysis; D-glyceraldehyde 3-phosphate and glycerone phosphate from D-glucose: step 3/4. Allosterically activated by ADP and other diphosphonucleosides, and allosterically inhibited by phosphoenolpyruvate. In terms of biological role, catalyzes the phosphorylation of D-fructose 6-phosphate to fructose 1,6-bisphosphate by ATP, the first committing step of glycolysis. The sequence is that of ATP-dependent 6-phosphofructokinase from Hamiltonella defensa subsp. Acyrthosiphon pisum (strain 5AT).